The primary structure comprises 220 residues: Adenylate kinase (220 aa).

10–15 (GAGKGT) lines the ATP pocket. The interval 30–59 (STGDMLRAAVKNCTPLGLKAKEIMDAGGLV) is NMP. AMP contacts are provided by residues T31, R36, 57 to 59 (GLV), 85 to 88 (GFPR), and Q92. Residues 126 to 163 (GRRTCPSCGKGFHVLFAPPRKAGVCDFCGADLVQRGDD) form an LID region. Residue R127 participates in ATP binding. C130, C133, C150, and C153 together coordinate Zn(2+). The AMP site is built by R160 and R171. L199 is a binding site for ATP.

Belongs to the adenylate kinase family. As to quaternary structure, monomer.

The protein localises to the cytoplasm. The catalysed reaction is AMP + ATP = 2 ADP. It participates in purine metabolism; AMP biosynthesis via salvage pathway; AMP from ADP: step 1/1. Catalyzes the reversible transfer of the terminal phosphate group between ATP and AMP. Plays an important role in cellular energy homeostasis and in adenine nucleotide metabolism. The polypeptide is Adenylate kinase (Pelobacter propionicus (strain DSM 2379 / NBRC 103807 / OttBd1)).